A 690-amino-acid chain; its full sequence is UvrABC system protein B (690 aa).

Residues glutamine 30 to arginine 188 enclose the Helicase ATP-binding domain. ATP is bound at residue glycine 43–threonine 50. Residues tyrosine 96–isoleucine 119 carry the Beta-hairpin motif. The Helicase C-terminal domain occupies glutamine 435–leucine 601. A UVR domain is found at tyrosine 641–alanine 676.

This sequence belongs to the UvrB family. As to quaternary structure, forms a heterotetramer with UvrA during the search for lesions. Interacts with UvrC in an incision complex.

It is found in the cytoplasm. Functionally, the UvrABC repair system catalyzes the recognition and processing of DNA lesions. A damage recognition complex composed of 2 UvrA and 2 UvrB subunits scans DNA for abnormalities. Upon binding of the UvrA(2)B(2) complex to a putative damaged site, the DNA wraps around one UvrB monomer. DNA wrap is dependent on ATP binding by UvrB and probably causes local melting of the DNA helix, facilitating insertion of UvrB beta-hairpin between the DNA strands. Then UvrB probes one DNA strand for the presence of a lesion. If a lesion is found the UvrA subunits dissociate and the UvrB-DNA preincision complex is formed. This complex is subsequently bound by UvrC and the second UvrB is released. If no lesion is found, the DNA wraps around the other UvrB subunit that will check the other stand for damage. The chain is UvrABC system protein B from Chlorobium phaeobacteroides (strain BS1).